We begin with the raw amino-acid sequence, 142 residues long: Large ribosomal subunit protein bL17 (142 aa).

It belongs to the bacterial ribosomal protein bL17 family. As to quaternary structure, part of the 50S ribosomal subunit. Contacts protein L32.

In Methylocella silvestris (strain DSM 15510 / CIP 108128 / LMG 27833 / NCIMB 13906 / BL2), this protein is Large ribosomal subunit protein bL17.